A 526-amino-acid polypeptide reads, in one-letter code: Microphthalmia-associated transcription factor (526 aa).

Positions 20-54 are disordered; that stretch reads EPKTYYELKSQPLKSSSSAEHSGASKPPLSSSTMT. Residues 34–44 show a composition bias toward low complexity; the sequence is SSSSAEHSGAS. Ser-180 is modified (phosphoserine; by MAPK). Residue Lys-289 forms a Glycyl lysine isopeptide (Lys-Gly) (interchain with G-Cter in SUMO) linkage. The bHLH domain occupies 311–364; that stretch reads QKKDNHNLIERRRRFNINDRIKELGTLIPKSNDPDMRWNKGTILKASVDYIRKL. Positions 355-401 form a coiled coil; it reads KASVDYIRKLQREQQRAKDLENRQKKLEHANRHLLLRVQELEMQARA. Positions 374-395 are leucine-zipper; that stretch reads LENRQKKLEHANRHLLLRVQEL. Ser-405 carries the post-translational modification Phosphoserine; by GSK3. A Phosphoserine modification is found at Ser-414. Residue Lys-423 forms a Glycyl lysine isopeptide (Lys-Gly) (interchain with G-Cter in SUMO) linkage. Ser-491 is subject to Phosphoserine. The segment at 496–526 is disordered; that stretch reads TDPLLSSVSPGASKTSSRRSSMSAEETEHAC. Over residues 507–519 the composition is skewed to low complexity; sequence ASKTSSRRSSMSA. Ser-516 is modified (phosphoserine; by RPS6KA1).

It belongs to the MiT/TFE family. Homodimer or heterodimer; dimerization is mediated via the coiled coil region. Efficient DNA binding requires dimerization with another bHLH protein. Binds DNA in the form of homodimer or heterodimer with either TFE3, TFEB or TFEC. Identified in a complex with HINT1 and CTNNB1. Interacts with KARS1. Interacts with VSX2. Phosphorylation at Ser-405 significantly enhances the ability to bind the tyrosinase promoter. Phosphorylated at Ser-180 and Ser-516 following KIT signaling, triggering a short live activation: Phosphorylation at Ser-180 and Ser-516 by MAPK and RPS6KA1, respectively, activate the transcription factor activity but also promote ubiquitination and subsequent degradation by the proteasome. Phosphorylated in response to blue light (415nm). In terms of processing, ubiquitinated following phosphorylation at Ser-180, leading to subsequent degradation by the proteasome. Deubiquitinated by USP13, preventing its degradation.

It is found in the nucleus. Its subcellular location is the cytoplasm. Functionally, transcription factor that regulates the expression of genes with essential roles in cell differentiation, proliferation and survival. Binds to M-boxes (5'-TCATGTG-3') and symmetrical DNA sequences (E-boxes) (5'-CACGTG-3') found in the promoters of target genes, such as BCL2 and tyrosinase (TYR). Plays an important role in melanocyte development by regulating the expression of tyrosinase (TYR) and tyrosinase-related protein 1 (TYRP1). Plays a critical role in the differentiation of various cell types, such as neural crest-derived melanocytes, mast cells, osteoclasts and optic cup-derived retinal pigment epithelium. The sequence is that of Microphthalmia-associated transcription factor (Mitf) from Rattus norvegicus (Rat).